Here is a 230-residue protein sequence, read N- to C-terminus: MAKKRGKKYQDALKKVDSKKEYAVKDAVQLVKDIAYANFDSTIEVAFNLNVDTKQADQQLRGAVVLPNGTGKDQTVIVFANGENAKAAQEAGADFVGDDDLVEKIQDGWLDFDVAIATPDMMPKVGRLGRVLGPKGLMPNPKTGTVTMDVAKAVSDAKAGQVTYRTDRDGNVAVPFGKVSFDTDKLVENLATLEDIVAKARPASVRGTYIKHASISSTFGPSVTLDLTTF.

It belongs to the universal ribosomal protein uL1 family. As to quaternary structure, part of the 50S ribosomal subunit.

Functionally, binds directly to 23S rRNA. The L1 stalk is quite mobile in the ribosome, and is involved in E site tRNA release. Protein L1 is also a translational repressor protein, it controls the translation of the L11 operon by binding to its mRNA. This chain is Large ribosomal subunit protein uL1, found in Limosilactobacillus reuteri subsp. reuteri (strain JCM 1112) (Lactobacillus reuteri).